Here is a 176-residue protein sequence, read N- to C-terminus: Ribosome maturation factor RimM (176 aa).

In terms of domain architecture, PRC barrel spans 93-172 (KDEFFYFDII…KIQVKNSLDI (80 aa)).

It belongs to the RimM family. Binds ribosomal protein uS19.

The protein resides in the cytoplasm. In terms of biological role, an accessory protein needed during the final step in the assembly of 30S ribosomal subunit, possibly for assembly of the head region. Essential for efficient processing of 16S rRNA. May be needed both before and after RbfA during the maturation of 16S rRNA. It has affinity for free ribosomal 30S subunits but not for 70S ribosomes. This chain is Ribosome maturation factor RimM, found in Campylobacter fetus subsp. fetus (strain 82-40).